Reading from the N-terminus, the 208-residue chain is MKLQVLDTKGNEIKEIALNDYVWGIEPHQQAIYDTVISQQAALRQGTKKVKTRAEVSGGGRKPWKQKGTGRARQGSIRAPQWKGGGVTFGPTPDINYKKSVNKKVRALAFRSVLSLKVKENNLVIVDKFDFAKPSTKEMVVVMKNLKIDDQKTLIVTKEKEELVVKSSNNITGVKTISANQLNVFDLLNATKLLITEEAAIAVEEVYA.

The segment at Val-50–Lys-83 is disordered.

The protein belongs to the universal ribosomal protein uL4 family. Part of the 50S ribosomal subunit.

Functionally, one of the primary rRNA binding proteins, this protein initially binds near the 5'-end of the 23S rRNA. It is important during the early stages of 50S assembly. It makes multiple contacts with different domains of the 23S rRNA in the assembled 50S subunit and ribosome. In terms of biological role, forms part of the polypeptide exit tunnel. This chain is Large ribosomal subunit protein uL4, found in Mycoplasma capricolum subsp. capricolum (strain California kid / ATCC 27343 / NCTC 10154).